A 143-amino-acid polypeptide reads, in one-letter code: D-aminoacyl-tRNA deacylase (143 aa).

Residues glycine 135–proline 136 carry the Gly-cisPro motif, important for rejection of L-amino acids motif.

Belongs to the DTD family. As to quaternary structure, homodimer.

The protein resides in the cytoplasm. It carries out the reaction glycyl-tRNA(Ala) + H2O = tRNA(Ala) + glycine + H(+). The enzyme catalyses a D-aminoacyl-tRNA + H2O = a tRNA + a D-alpha-amino acid + H(+). Functionally, an aminoacyl-tRNA editing enzyme that deacylates mischarged D-aminoacyl-tRNAs. Also deacylates mischarged glycyl-tRNA(Ala), protecting cells against glycine mischarging by AlaRS. Acts via tRNA-based rather than protein-based catalysis; rejects L-amino acids rather than detecting D-amino acids in the active site. By recycling D-aminoacyl-tRNA to D-amino acids and free tRNA molecules, this enzyme counteracts the toxicity associated with the formation of D-aminoacyl-tRNA entities in vivo and helps enforce protein L-homochirality. In Mycobacterium bovis (strain ATCC BAA-935 / AF2122/97), this protein is D-aminoacyl-tRNA deacylase.